The chain runs to 205 residues: Holliday junction branch migration complex subunit RuvA (205 aa).

Positions 1–64 are domain I; it reads MIGRLRGVLV…EDAQLLYGFI (64 aa). The domain II stretch occupies residues 65-143; that stretch reads TKQERALFRL…SLLETSAGSE (79 aa). A flexible linker region spans residues 144–156; it reads REFMLKSNYTPAP. The segment at 157–205 is domain III; that stretch reads VVNTAEEDAIAALLSLGYKPAQASKAVSAAFKEGMSSEDLIKSSLKSML.

It belongs to the RuvA family. Homotetramer. Forms an RuvA(8)-RuvB(12)-Holliday junction (HJ) complex. HJ DNA is sandwiched between 2 RuvA tetramers; dsDNA enters through RuvA and exits via RuvB. An RuvB hexamer assembles on each DNA strand where it exits the tetramer. Each RuvB hexamer is contacted by two RuvA subunits (via domain III) on 2 adjacent RuvB subunits; this complex drives branch migration. In the full resolvosome a probable DNA-RuvA(4)-RuvB(12)-RuvC(2) complex forms which resolves the HJ.

Its subcellular location is the cytoplasm. In terms of biological role, the RuvA-RuvB-RuvC complex processes Holliday junction (HJ) DNA during genetic recombination and DNA repair, while the RuvA-RuvB complex plays an important role in the rescue of blocked DNA replication forks via replication fork reversal (RFR). RuvA specifically binds to HJ cruciform DNA, conferring on it an open structure. The RuvB hexamer acts as an ATP-dependent pump, pulling dsDNA into and through the RuvAB complex. HJ branch migration allows RuvC to scan DNA until it finds its consensus sequence, where it cleaves and resolves the cruciform DNA. This is Holliday junction branch migration complex subunit RuvA from Shewanella woodyi (strain ATCC 51908 / MS32).